Here is a 550-residue protein sequence, read N- to C-terminus: Glucose-6-phosphate isomerase 1 (550 aa).

Glutamate 358 functions as the Proton donor in the catalytic mechanism. Catalysis depends on residues histidine 389 and lysine 513.

Belongs to the GPI family.

The protein localises to the cytoplasm. The catalysed reaction is alpha-D-glucose 6-phosphate = beta-D-fructose 6-phosphate. It functions in the pathway carbohydrate biosynthesis; gluconeogenesis. The protein operates within carbohydrate degradation; glycolysis; D-glyceraldehyde 3-phosphate and glycerone phosphate from D-glucose: step 2/4. Functionally, catalyzes the reversible isomerization of glucose-6-phosphate to fructose-6-phosphate. This is Glucose-6-phosphate isomerase 1 from Streptomyces coelicolor (strain ATCC BAA-471 / A3(2) / M145).